Here is a 432-residue protein sequence, read N- to C-terminus: Neuronal pentraxin-1 (432 aa).

The N-terminal stretch at 1 to 22 (MLAGRAARTCALLALCLLGSRA) is a signal peptide. Residues 90 to 128 (ESQSTLDAGPGEARSGGGRKQPGSGKNTMGDLSRTPASE) form a disordered region. 2 N-linked (GlcNAc...) asparagine glycosylation sites follow: Asn-154 and Asn-193. In terms of domain architecture, Pentraxin (PTX) spans 226–428 (DKFQLTFPLR…GATKWTFEAC (203 aa)). The cysteines at positions 256 and 316 are disulfide-linked. Residues Asn-280, Glu-358, Gln-359, Asp-360, and Gln-370 each coordinate Ca(2+).

Homooligomer or heterooligomer (probably pentamer) with neuronal pentraxin receptor (NPTXR). The cofactor is Ca(2+). Post-translationally, glycosylated. In terms of tissue distribution, cerebellum, hippocampus and cerebral cortex.

Its subcellular location is the secreted. The protein resides in the cytoplasmic vesicle. The protein localises to the secretory vesicle. It localises to the endoplasmic reticulum. May be involved in mediating uptake of synaptic material during synapse remodeling or in mediating the synaptic clustering of AMPA glutamate receptors at a subset of excitatory synapses. The polypeptide is Neuronal pentraxin-1 (Nptx1) (Rattus norvegicus (Rat)).